A 329-amino-acid polypeptide reads, in one-letter code: Thioredoxin-like fold domain-containing protein MRL7L homolog, chloroplastic (329 aa).

The transit peptide at 1 to 46 (MALQSCCSSSASVPATCSALCLAEATRAASLFVRPRAAARRLVLAR) directs the protein to the chloroplast. The tract at residues 58–91 (AVQLVLGGRARDDGSESESSDDEDDDEPMQMTDE) is disordered. Residues 72–85 (SESESSDDEDDDEP) show a composition bias toward acidic residues.

The protein resides in the plastid. It is found in the chloroplast stroma. Its function is as follows. Plays an essential role in early steps of chloroplast development. Involved in the regulation of plastid gene expression. Required for the proper function of the plastid transcriptional machinery and protein accumulation in thylakoid membranes. May function as molecular chaperone to ensure proper organization of the nucleoids in chloroplasts. In Oryza sativa subsp. japonica (Rice), this protein is Thioredoxin-like fold domain-containing protein MRL7L homolog, chloroplastic.